Consider the following 662-residue polypeptide: Zinc finger protein 17 (662 aa).

The KRAB domain maps to 8-101; it reads MVFEDVAIHF…LLKDILHLAE (94 aa). C2H2-type zinc fingers lie at residues 190–212, 218–240, 246–268, 274–296, 302–324, 358–380, 386–408, 414–436, 442–464, 470–492, 498–520, 526–548, 554–576, 582–604, 610–632, and 638–660; these read YSCTQCGKDFCHQHTLFEHQKIH, YECSECGKLFRYNSDLIKHQRNH, YKCSECGKAFSLKYNVVQHQKIH, YECSECGKAFLRKSHLLQHQRIH, YVCSECGKAFLTQAHLVGHQKIH, FYCCECGKFFMDSCTLIIHQRVH, YECNECGKFFRYRSTLIRHQKVH, YECSECGKFFMDTSTLIIHQRVH, YECNKCGKFFRYCFTLNRHQRVH, YECSECGKFFVDSCTLKSHQRVH, FECSICGKSFRCRSTLDTHQRIH, YECSECGKFFRHNSNHIRHRRNH, FECTECGRVFSQNSHLIRHQKVH, YKCSKCGKFFMDSSTLISHERVH, YECSECGKVFRYNSSLIKHRRIH, and YQCSECGRVFNQNSHLIQHQKVH.

This sequence belongs to the krueppel C2H2-type zinc-finger protein family.

The protein resides in the nucleus. In terms of biological role, may be involved in transcriptional regulation. The sequence is that of Zinc finger protein 17 (ZNF17) from Homo sapiens (Human).